Here is a 292-residue protein sequence, read N- to C-terminus: Formamidopyrimidine-DNA glycosylase (292 aa).

The active-site Schiff-base intermediate with DNA is Pro2. The Proton donor role is filled by Glu3. Lys61 (proton donor; for beta-elimination activity) is an active-site residue. Residues His103, Arg122, and Lys168 each contribute to the DNA site. Residues 254–288 (DAYGREGEHCRRCGAVMRREKFMNRSSFYCPRCQP) form an FPG-type zinc finger. Catalysis depends on Arg278, which acts as the Proton donor; for delta-elimination activity.

Belongs to the FPG family. In terms of assembly, monomer. Zn(2+) is required as a cofactor.

It catalyses the reaction Hydrolysis of DNA containing ring-opened 7-methylguanine residues, releasing 2,6-diamino-4-hydroxy-5-(N-methyl)formamidopyrimidine.. It carries out the reaction 2'-deoxyribonucleotide-(2'-deoxyribose 5'-phosphate)-2'-deoxyribonucleotide-DNA = a 3'-end 2'-deoxyribonucleotide-(2,3-dehydro-2,3-deoxyribose 5'-phosphate)-DNA + a 5'-end 5'-phospho-2'-deoxyribonucleoside-DNA + H(+). In terms of biological role, involved in base excision repair of DNA damaged by oxidation or by mutagenic agents. Acts as a DNA glycosylase that recognizes and removes damaged bases. Has a preference for oxidized purines, such as 7,8-dihydro-8-oxoguanine (8-oxoG). Has AP (apurinic/apyrimidinic) lyase activity and introduces nicks in the DNA strand. Cleaves the DNA backbone by beta-delta elimination to generate a single-strand break at the site of the removed base with both 3'- and 5'-phosphates. The polypeptide is Formamidopyrimidine-DNA glycosylase (Mycobacterium ulcerans (strain Agy99)).